The sequence spans 431 residues: Adenylosuccinate synthetase (431 aa).

GTP contacts are provided by residues 12-18 (GDEGKGK) and 40-42 (GHT). Asp13 serves as the catalytic Proton acceptor. Mg(2+)-binding residues include Asp13 and Gly40. Residues 13-16 (DEGK), 38-41 (NAGH), Thr129, Arg143, Gln224, and Thr239 each bind IMP. Catalysis depends on His41, which acts as the Proton donor. Lys292 is covalently cross-linked (Isoglutamyl lysine isopeptide (Lys-Gln) (interchain with Q-Cter in protein Pup)). 299 to 305 (VTTGRAR) is a binding site for substrate. Residue Arg303 coordinates IMP. GTP contacts are provided by residues Arg305, 331–333 (KLD), and 413–415 (GVG).

This sequence belongs to the adenylosuccinate synthetase family. As to quaternary structure, homodimer. The cofactor is Mg(2+).

Its subcellular location is the cytoplasm. The catalysed reaction is IMP + L-aspartate + GTP = N(6)-(1,2-dicarboxyethyl)-AMP + GDP + phosphate + 2 H(+). The protein operates within purine metabolism; AMP biosynthesis via de novo pathway; AMP from IMP: step 1/2. Plays an important role in the de novo pathway of purine nucleotide biosynthesis. Catalyzes the first committed step in the biosynthesis of AMP from IMP. The protein is Adenylosuccinate synthetase of Mycolicibacterium smegmatis (strain ATCC 700084 / mc(2)155) (Mycobacterium smegmatis).